A 727-amino-acid polypeptide reads, in one-letter code: Probable acyl-activating enzyme 18, peroxisomal (727 aa).

The Microbody targeting signal signature appears at 725–727; the sequence is SRI.

This sequence belongs to the ATP-dependent AMP-binding enzyme family. As to expression, expressed in flowers.

The protein resides in the peroxisome. In terms of biological role, may be involved in the peroxisomal activation of 2,4-dichlorophenoxybutyric acid (2,4-DB), a precursor of active auxins that inhibit root growth. The polypeptide is Probable acyl-activating enzyme 18, peroxisomal (AAE18) (Arabidopsis thaliana (Mouse-ear cress)).